Consider the following 122-residue polypeptide: Basic phospholipase A2 F15 (122 aa).

7 disulfides stabilise this stretch: cysteine 26/cysteine 115, cysteine 28/cysteine 44, cysteine 43/cysteine 95, cysteine 49/cysteine 122, cysteine 50/cysteine 88, cysteine 57/cysteine 81, and cysteine 75/cysteine 86. 3 residues coordinate Ca(2+): tyrosine 27, glycine 29, and glycine 31. The active site involves histidine 47. Position 48 (aspartate 48) interacts with Ca(2+). Aspartate 89 is an active-site residue.

Belongs to the phospholipase A2 family. Group II subfamily. D49 sub-subfamily. As to quaternary structure, when this protein is associated with crotapotin (F5 or F7), it forms the crotoxin protein. The cofactor is Ca(2+). Expressed by the venom gland.

The protein resides in the secreted. It catalyses the reaction a 1,2-diacyl-sn-glycero-3-phosphocholine + H2O = a 1-acyl-sn-glycero-3-phosphocholine + a fatty acid + H(+). Activated by heparin. Inhibited by its chaperone crotapotin. Functionally, snake venom phospholipase A2 (PLA2) that shows moderate neurotoxic activity in isolated mouse phrenic nerve diaphragm but shows high neurotoxic activity in a chick biventer cervis preparation. Also shows a high bactericidal effect against both Gram-negative and Gram-positive bacteria. PLA2 catalyzes the calcium-dependent hydrolysis of the 2-acyl groups in 3-sn-phosphoglycerides. This is Basic phospholipase A2 F15 from Crotalus durissus terrificus (South American rattlesnake).